Reading from the N-terminus, the 86-residue chain is Conidiation-specific protein 10 (86 aa).

Positions 1–11 are enriched in polar residues; it reads MAGTGNDNPGN. Positions 1 to 86 are disordered; it reads MAGTGNDNPG…SGGTGADDDE (86 aa). The span at 49 to 58 shows a compositional bias: low complexity; it reads SKGGKASSGS. Residues 62-71 are compositionally biased toward basic and acidic residues; the sequence is GSEKAREAGR. Residues 75-86 are compositionally biased toward gly residues; that stretch reads KASGGTGADDDE.

Belongs to the con-10 family.

This is Conidiation-specific protein 10 (con-10) from Neurospora crassa (strain ATCC 24698 / 74-OR23-1A / CBS 708.71 / DSM 1257 / FGSC 987).